The sequence spans 519 residues: Chaperone SurA (519 aa).

An N-terminal signal peptide occupies residues 1 to 31 (MMRSLHSLRRMSGTVLALMLAAGLPLSAAQA). Composition is skewed to low complexity over residues 31–45 (AQPA…QKPA) and 197–207 (PAAAQATRAPA). 2 disordered regions span residues 31 to 50 (AQPA…PAPS) and 196 to 221 (NPAA…PAQS). Positions 223–324 (PAMLVLAQIL…NGFHILKVVD (102 aa)) constitute a PpiC 1 domain. The interval 328 to 361 (GGQPAQAARPAPAPAPQQPSSFQEGPSVAAPQGP) is disordered. Residues 364-463 (VTQTHARHIL…FGWHLIQVLE (100 aa)) enclose the PpiC 2 domain.

The protein resides in the periplasm. The enzyme catalyses [protein]-peptidylproline (omega=180) = [protein]-peptidylproline (omega=0). Functionally, chaperone involved in the correct folding and assembly of outer membrane proteins. Recognizes specific patterns of aromatic residues and the orientation of their side chains, which are found more frequently in integral outer membrane proteins. May act in both early periplasmic and late outer membrane-associated steps of protein maturation. In Bordetella parapertussis (strain 12822 / ATCC BAA-587 / NCTC 13253), this protein is Chaperone SurA.